The following is a 343-amino-acid chain: Isopentenyl-diphosphate delta-isomerase (343 aa).

9-10 provides a ligand contact to substrate; it reads RK. Residues Ser67, 68–70, Ser98, and Asn127 contribute to the FMN site; that span reads AMT. 98–100 provides a ligand contact to substrate; that stretch reads SQR. Gln162 is a substrate binding site. Glu163 lines the Mg(2+) pocket. FMN is bound by residues Lys194, Thr224, 273–275, and 294–295; these read GVR and AA.

Belongs to the IPP isomerase type 2 family. Homooctamer. Dimer of tetramers. FMN serves as cofactor. Requires NADPH as cofactor. It depends on Mg(2+) as a cofactor.

The protein resides in the cytoplasm. The catalysed reaction is isopentenyl diphosphate = dimethylallyl diphosphate. Functionally, involved in the biosynthesis of isoprenoids. Catalyzes the 1,3-allylic rearrangement of the homoallylic substrate isopentenyl (IPP) to its allylic isomer, dimethylallyl diphosphate (DMAPP). The chain is Isopentenyl-diphosphate delta-isomerase from Xanthobacter autotrophicus (strain ATCC BAA-1158 / Py2).